A 429-amino-acid chain; its full sequence is Gamma-glutamyl phosphate reductase (429 aa).

It belongs to the gamma-glutamyl phosphate reductase family.

It is found in the cytoplasm. The catalysed reaction is L-glutamate 5-semialdehyde + phosphate + NADP(+) = L-glutamyl 5-phosphate + NADPH + H(+). Its pathway is amino-acid biosynthesis; L-proline biosynthesis; L-glutamate 5-semialdehyde from L-glutamate: step 2/2. In terms of biological role, catalyzes the NADPH-dependent reduction of L-glutamate 5-phosphate into L-glutamate 5-semialdehyde and phosphate. The product spontaneously undergoes cyclization to form 1-pyrroline-5-carboxylate. This is Gamma-glutamyl phosphate reductase from Rhizorhabdus wittichii (strain DSM 6014 / CCUG 31198 / JCM 15750 / NBRC 105917 / EY 4224 / RW1) (Sphingomonas wittichii).